The following is a 951-amino-acid chain: Multiple C2 and transmembrane domain-containing protein 1 (951 aa).

Disordered regions lie at residues 29–79, 92–117, 129–198, and 210–231; these read LGVG…RWSG, SSSQ…AEQG, LPVA…QKSS, and LEPA…ALQK. Residues 31–43 show a composition bias toward gly residues; sequence VGKGKGGGGGRAG. Residues 147–168 show a composition bias toward low complexity; that stretch reads PGGRSPDSAPSSSSASSSLSSS. Basic and acidic residues predominate over residues 174 to 184; that stretch reads RGDRVRDESTR. Low complexity predominate over residues 219–228; sequence PARGPAEPQA. C2 domains lie at 240 to 358, 404 to 521, and 555 to 676; these read KIST…DVTL, QTQS…KLEL, and QKER…AYVL. Ca(2+) is bound by residues Asp275, Asp281, Asp328, Asp330, Asp336, Asp438, Asp444, Asp491, Asp493, Asp499, Asp594, Asp600, Asp646, Asp648, and Asp654. 2 helical membrane-spanning segments follow: residues 763-783 and 866-886; these read FVLF…LLLL and PFLS…LYFI.

It belongs to the MCTP family. Ca(2+) serves as cofactor.

It localises to the cytoplasmic vesicle. Its subcellular location is the secretory vesicle. The protein localises to the synaptic vesicle membrane. It is found in the recycling endosome. The protein resides in the endoplasmic reticulum membrane. Functionally, calcium sensor which is essential for the stabilization of normal baseline neurotransmitter release and for the induction and long-term maintenance of presynaptic homeostatic plasticity. The polypeptide is Multiple C2 and transmembrane domain-containing protein 1 (Mus musculus (Mouse)).